A 178-amino-acid polypeptide reads, in one-letter code: NAD(P)H-quinone oxidoreductase subunit 6, chloroplastic (178 aa).

A run of 5 helical transmembrane segments spans residues 10–30, 32–52, 61–81, 94–114, and 154–174; these read FILVFLGSGLILGGLGVVLFT, PIYSAFSLGLVLVCISLFYIL, AQLLIYVGAVNVLIIFAVMFM, LWTIGDGLTSLVCTSIFFSLI, and FFLPFELVSIILLVALIGAIA.

It belongs to the complex I subunit 6 family. NDH is composed of at least 16 different subunits, 5 of which are encoded in the nucleus.

It localises to the plastid. The protein localises to the chloroplast thylakoid membrane. The enzyme catalyses a plastoquinone + NADH + (n+1) H(+)(in) = a plastoquinol + NAD(+) + n H(+)(out). It catalyses the reaction a plastoquinone + NADPH + (n+1) H(+)(in) = a plastoquinol + NADP(+) + n H(+)(out). Its function is as follows. NDH shuttles electrons from NAD(P)H:plastoquinone, via FMN and iron-sulfur (Fe-S) centers, to quinones in the photosynthetic chain and possibly in a chloroplast respiratory chain. The immediate electron acceptor for the enzyme in this species is believed to be plastoquinone. Couples the redox reaction to proton translocation, and thus conserves the redox energy in a proton gradient. The protein is NAD(P)H-quinone oxidoreductase subunit 6, chloroplastic (ndhG) of Citrus sinensis (Sweet orange).